The primary structure comprises 160 residues: Troponin C, skeletal muscle (160 aa).

Thr-2 carries the N-acetylthreonine modification. EF-hand domains lie at 15-50 (EMIA…LGQT), 51-86 (PTKE…QMKE), 91-126 (KSEE…SGEH), and 127-160 (VTEE…EGVQ). Ca(2+)-binding residues include Asp-28, Asp-30, Asp-34, Glu-39, Asp-64, Asp-66, Ser-68, Thr-70, Glu-75, Asp-104, Asn-106, Asp-108, Tyr-110, Glu-115, Asp-140, Asn-142, Asp-144, Arg-146, and Glu-151.

Belongs to the troponin C family. As to expression, fast skeletal muscle.

Its function is as follows. Troponin is the central regulatory protein of striated muscle contraction. Tn consists of three components: Tn-I which is the inhibitor of actomyosin ATPase, Tn-T which contains the binding site for tropomyosin and Tn-C. The binding of calcium to Tn-C abolishes the inhibitory action of Tn on actin filaments. The protein is Troponin C, skeletal muscle (Tnnc2) of Mus musculus (Mouse).